The following is a 238-amino-acid chain: Ribosomal RNA small subunit methyltransferase G (238 aa).

S-adenosyl-L-methionine contacts are provided by residues glycine 77, phenylalanine 82, 128-129 (AE), and arginine 147. The tract at residues 219–238 (KKTPARYPRKPGTPNKQPIQ) is disordered.

It belongs to the methyltransferase superfamily. RNA methyltransferase RsmG family.

Its subcellular location is the cytoplasm. Its function is as follows. Specifically methylates the N7 position of guanine in position 535 of 16S rRNA. The polypeptide is Ribosomal RNA small subunit methyltransferase G (Geobacillus thermodenitrificans (strain NG80-2)).